A 334-amino-acid polypeptide reads, in one-letter code: Large ribosomal subunit protein uL3 (334 aa).

Residues 1 to 10 (MGMKKNRPRR) are compositionally biased toward basic residues. The interval 1–21 (MGMKKNRPRRGSLAFSPRKRA) is disordered.

This sequence belongs to the universal ribosomal protein uL3 family. As to quaternary structure, part of the 50S ribosomal subunit. Forms a cluster with proteins L14 and L24e.

One of the primary rRNA binding proteins, it binds directly near the 3'-end of the 23S rRNA, where it nucleates assembly of the 50S subunit. This chain is Large ribosomal subunit protein uL3, found in Methanococcus maripaludis (strain C5 / ATCC BAA-1333).